A 1063-amino-acid chain; its full sequence is NAD-specific glutamate dehydrogenase (1063 aa).

It belongs to the Glu/Leu/Phe/Val dehydrogenases family. Highly divergent. Homotetramer.

It carries out the reaction L-glutamate + NAD(+) + H2O = 2-oxoglutarate + NH4(+) + NADH + H(+). Its activity is regulated as follows. Allosterically activated by NADP(+). The chain is NAD-specific glutamate dehydrogenase from Achlya klebsiana.